Reading from the N-terminus, the 682-residue chain is 1,4-alpha-glucan-branching enzyme (682 aa).

Residues Trp88 and Lys124 each contribute to the (1,4-alpha-D-glucosyl)n site. The active-site Nucleophile is the Asp342. Catalysis depends on Glu397, which acts as the Proton donor.

Belongs to the glycosyl hydrolase 13 family. GlgB subfamily.

The protein localises to the cytoplasm. The enzyme catalyses Transfers a segment of a (1-&gt;4)-alpha-D-glucan chain to a primary hydroxy group in a similar glucan chain.. The protein operates within glycan biosynthesis; glycogen biosynthesis. Glycogen-branching enzyme participates in the glycogen biosynthetic process along with glycogenin and glycogen synthase. Generates alpha-1,6-glucosidic branches from alpha-1,4-linked glucose chains, to increase solubility of the glycogen polymer. This chain is 1,4-alpha-glucan-branching enzyme (GLC3), found in Cryptococcus neoformans var. neoformans serotype D (strain B-3501A) (Filobasidiella neoformans).